The following is a 167-amino-acid chain: Ubiquitin-conjugating enzyme E2 2 (167 aa).

Residues 4 to 150 (PARRRLMRDF…VKETVEKSWE (147 aa)) form the UBC core domain. Catalysis depends on C88, which acts as the Glycyl thioester intermediate. The segment at 148-167 (SWEDNMDDMDDSDEDDEDDE) is disordered. The segment covering 151 to 167 (DNMDDMDDSDEDDEDDE) has biased composition (acidic residues).

This sequence belongs to the ubiquitin-conjugating enzyme family.

The protein resides in the cytoplasm. The protein localises to the nucleus. It carries out the reaction S-ubiquitinyl-[E1 ubiquitin-activating enzyme]-L-cysteine + [E2 ubiquitin-conjugating enzyme]-L-cysteine = [E1 ubiquitin-activating enzyme]-L-cysteine + S-ubiquitinyl-[E2 ubiquitin-conjugating enzyme]-L-cysteine.. It participates in protein modification; protein ubiquitination. Functionally, catalyzes the covalent attachment of ubiquitin to other proteins. Plays a role in transcription regulation by catalyzing the monoubiquitination of histone H2B to form H2BK123ub1. H2BK123ub1 gives a specific tag for epigenetic transcriptional activation and is also a prerequisite for H3K4me and H3K79me formation. Also involved in postreplication repair of UV-damaged DNA, in N-end rule-dependent protein degradation and in sporulation. This Candida glabrata (strain ATCC 2001 / BCRC 20586 / JCM 3761 / NBRC 0622 / NRRL Y-65 / CBS 138) (Yeast) protein is Ubiquitin-conjugating enzyme E2 2 (UBC2).